The chain runs to 451 residues: Clusterin (451 aa).

An N-terminal signal peptide occupies residues 1–18; the sequence is MELPLLALLSLGLVCQGG. 5 disulfides stabilise this stretch: Cys98–Cys314, Cys109–Cys306, Cys112–Cys303, Cys117–Cys296, and Cys125–Cys286. Asn99, Asn141, Asn278, Asn355, Asn375, and Asn447 each carry an N-linked (GlcNAc...) asparagine glycan.

It belongs to the clusterin family. As to quaternary structure, antiparallel disulfide-linked heterodimer of an alpha chain and a beta chain. Self-associates and forms higher oligomers. Interacts with a broad range of misfolded proteins. Post-translationally, proteolytically cleaved on its way through the secretory system, probably within the Golgi lumen. Polyubiquitinated, leading to proteasomal degradation.

The protein resides in the secreted. It localises to the cytoplasmic vesicle. It is found in the secretory vesicle. Its subcellular location is the chromaffin granule. The protein localises to the nucleus. The protein resides in the cytoplasm. It localises to the mitochondrion membrane. It is found in the cytosol. Its subcellular location is the endoplasmic reticulum. Functions as extracellular chaperone that prevents aggregation of nonnative proteins. Prevents stress-induced aggregation of blood plasma proteins. Does not require ATP. Maintains partially unfolded proteins in a state appropriate for subsequent refolding by other chaperones, such as HSPA8/HSC70. Does not refold proteins by itself. Binding to cell surface receptors triggers internalization of the chaperone-client complex and subsequent lysosomal or proteasomal degradation. When secreted, protects cells against apoptosis and against cytolysis by complement: inhibits assembly of the complement membrane attack complex (MAC) by preventing polymerization of C9 pore component of the MAC complex. Intracellular forms interact with ubiquitin and SCF (SKP1-CUL1-F-box protein) E3 ubiquitin-protein ligase complexes and promote the ubiquitination and subsequent proteasomal degradation of target proteins. Modulates NF-kappa-B transcriptional activity. Promotes apoptosis when in the nucleus. Inhibits apoptosis when associated with the mitochondrial membrane by interference with BAX-dependent release of cytochrome c into the cytoplasm. Plays a role in the regulation of cell proliferation. In Coturnix japonica (Japanese quail), this protein is Clusterin (CLU).